Consider the following 890-residue polypeptide: Bacteriocin BCN5 (890 aa).

SH3b domains are found at residues 22–84 (PPNA…TNAT) and 179–241 (ENNA…TNAT). In terms of domain architecture, Peptidase M14 spans 303-549 (GYVKYEGAAA…RYLQKIINAV (247 aa)). Residues His-358, Glu-361, and His-475 each coordinate Zn(2+). The Proton donor/acceptor role is filled by Glu-525. The 65-residue stretch at 572–636 (EATGEVINVQ…VNSGYIIILK (65 aa)) folds into the SH3b 3 domain. Positions 815-869 (KALAAAVIVNGVETMFCAFLGGFIAQCIAPEFPIVAAVAGAIVSAIAAFAIGYFV) are hydrophobic.

Requires Zn(2+) as cofactor.

May function as an ionophore. This Clostridium perfringens protein is Bacteriocin BCN5 (bcn).